We begin with the raw amino-acid sequence, 417 residues long: MGRRRGVELYRAPFPLYALRIDPKTGLLIAAGGGGAAKTGIKNGVHFLQLELINGCLSASLLHSHDTETRATMNLALAGDILAAGQDAQCQLLRFQVHQQKGSKAEKSGSKEQGPRQRKGAPPAEKKSGAQVHPEGVELKVKNLEAVQTDFSNEPLQKVVCFNHDNTLLATGGTDGHVRVWKVPSLEKVLEFKAHEGEIGDLTLGPDGKLVTVGWDFKASVWQKDQLVTQLQWQENGPASSNTPYRYQACRFGQVPDQLGGLRLFTVQIPHKRLRQPPPCYLTAWDSSTFLPLRTRSCGHEVISCLSVSDSGTFLGLGTVTGSVAIYIAFSLQRLYYVKEAHGIVVTDVTFLPEKGCGPKLLGPHETALFSVAVDSRCQLHLLPSRRSVPVWLLLLLCVGLIIVTILLLQTAFPGFL.

Topologically, residues 1-388 (MGRRRGVELY…QLHLLPSRRS (388 aa)) are cytoplasmic. Y10 is subject to 3'-nitrotyrosine. Residues 101–135 (KGSKAEKSGSKEQGPRQRKGAPPAEKKSGAQVHPE) form a disordered region. A compositionally biased stretch (basic and acidic residues) spans 103-115 (SKAEKSGSKEQGP). WD repeat units lie at residues 152–191 (SNEPLQKVVCFNHDNTLLATGGTDGHVRVWKVPSLEKVLE), 194–232 (AHEGEIGDLTLGPDGKLVTVGWDFKASVWQKDQLVTQLQ), and 298–337 (CGHEVISCLSVSDSGTFLGLGTVTGSVAIYIAFSLQRLYY). A helical membrane pass occupies residues 389 to 409 (VPVWLLLLLCVGLIIVTILLL). At 410–417 (QTAFPGFL) the chain is on the lumenal side.

In terms of assembly, interacts with SAR1B (GDP-bound form). Interacts with MIA2; recruits PREB to endoplasmic reticulum exit sites. Interacts with CIDEB; facilitating loading of SCAP-SREBP into COPII vesicles.

The protein localises to the endoplasmic reticulum membrane. It localises to the nucleus. Guanine nucleotide exchange factor (GEF) that regulates the assembly of the coat protein complex II/COPII in endoplasmic reticulum (ER) to Golgi vesicle-mediated transport. Selectively activates SAR1A and SAR1B by promoting the exchange of guanosine diphosphate (GDP) for guanosine triphosphate (GTP) in these small GTPases. In their activated GTP-bound state, SAR1A and SAR1B insert into the membrane of the endoplasmic reticulum where they recruit the remainder of the coat protein complex II/COPII which is responsible for both the sorting of proteins and the deformation and budding of membranes into vesicles destined to the Golgi. In terms of biological role, was first identified based on its probable role in the regulation of pituitary gene transcription. Binds to the prolactin gene (PRL) promoter and seems to activate transcription. This is Guanine nucleotide-exchange factor SEC12 from Mus musculus (Mouse).